The sequence spans 264 residues: Carbonic anhydrase 7 (264 aa).

The 258-residue stretch at 5-262 folds into the Alpha-carbonic anhydrase domain; sequence HGWGYGQDDG…LKGRVVKASF (258 aa). The Proton donor/acceptor role is filled by His-66. The Zn(2+) site is built by His-96, His-98, and His-121. 201-202 is a binding site for substrate; it reads TT.

Belongs to the alpha-carbonic anhydrase family. It depends on Zn(2+) as a cofactor.

Its subcellular location is the cytoplasm. It carries out the reaction hydrogencarbonate + H(+) = CO2 + H2O. Its activity is regulated as follows. Activated by histamine, L-adrenaline, L- and D-histidine, and L- and D-phenylalanine. Inhibited by coumarins, sulfonamide derivatives such as acetazolamide (AZA), by saccharin and Foscarnet (phosphonoformate trisodium salt). In terms of biological role, reversible hydration of carbon dioxide. This chain is Carbonic anhydrase 7 (CA7), found in Homo sapiens (Human).